The following is a 62-amino-acid chain: MKTSILFVIFSLALLFALSAATEIEETDRACGQFWWKCGEGKPPCCANFACKIGLYLCIWSP.

Positions M1–A21 are cleaved as a signal peptide. Residues T22–R29 constitute a propeptide that is removed on maturation. 3 cysteine pairs are disulfide-bonded: C31–C46, C38–C51, and C45–C58.

It belongs to the neurotoxin 10 (Hwtx-1) family. 33 (Jztx-1) subfamily. Expressed by the venom gland.

The protein localises to the secreted. Its function is as follows. Inhibits voltage-gated sodium channels, preferentially subtype Nav1.5/SCN5A (in cardiac myocytes), but also Nav1.6/SCN8A and Nav1.7/SCN9A (TTX-sensitive Nav in rat DRG neurons) and invertebrate Nav (in insect neurons) as well as voltage-gated potassium channels of the subtype Kv2.1/KCNB1. Is suggested to bind to site 3 of the sodium channels and inhibit the inactivation of the activated channels, thereby blocking neuronal transmission. On potassium channels, inhibits activation of channels with an IC(50) of 8.05 uM through a voltage sensor-trapping mechanism. Increases muscle contraction in several assays (mouse phrenic nerve-diaphragm, toad heart, rat vas deferens) and is suggested to act both presynaptically and postsynaptically. Functionally, moderately inhibits voltage-gated sodium channels and weakly inhibits voltage-gated potassium channel. Inhibits the inactivation of rat Nav1.2/SCN2A (IC(50)=870 nM), rat Nav1.3/SCN3A (IC(50)=845 nM), rat Nav1.4/SCN4A (IC(50)=339 nM), human Nav1.5/SCN5A (IC(50)=335 nM) and human Nav1.7/SCN9A sodium channels (IC(50)=348 nM). The toxin delays the inactivation of sodium channels without affecting the activation and steady-state inactivation kinetics in the physiological range of voltages. Site-directed mutagenesis of the sodium channel indicates that the toxin interacts with site 3 located at the extracellular S3-S4 linker of domain IV. On potassium channels, it inhibits activation of channels with an IC(50) of 8.05 uM through a voltage sensor-trapping mechanism. It increases muscle contraction in several assays (mouse phrenic nerve-diaphragm, toad heart, rat vas deferens) and is suggested to act both presynaptically and postsynaptically. This chain is Delta-theraphotoxin-Cg1a 1, found in Chilobrachys guangxiensis (Chinese earth tiger tarantula).